Reading from the N-terminus, the 78-residue chain is DNA gyrase inhibitor YacG (78 aa).

The Zn(2+) site is built by Cys-7, Cys-10, Cys-26, and Cys-30.

This sequence belongs to the DNA gyrase inhibitor YacG family. As to quaternary structure, interacts with GyrB. Zn(2+) is required as a cofactor.

Its function is as follows. Inhibits all the catalytic activities of DNA gyrase by preventing its interaction with DNA. Acts by binding directly to the C-terminal domain of GyrB, which probably disrupts DNA binding by the gyrase. The chain is DNA gyrase inhibitor YacG from Colwellia psychrerythraea (strain 34H / ATCC BAA-681) (Vibrio psychroerythus).